A 256-amino-acid polypeptide reads, in one-letter code: Ribonuclease HII (256 aa).

The RNase H type-2 domain maps to 72–256 (QYVAGIDEVG…TFRPVPDYVN (185 aa)). The a divalent metal cation site is built by aspartate 78, glutamate 79, and aspartate 170.

It belongs to the RNase HII family. It depends on Mn(2+) as a cofactor. Mg(2+) serves as cofactor.

It localises to the cytoplasm. The enzyme catalyses Endonucleolytic cleavage to 5'-phosphomonoester.. Functionally, endonuclease that specifically degrades the RNA of RNA-DNA hybrids. The sequence is that of Ribonuclease HII from Limosilactobacillus fermentum (strain NBRC 3956 / LMG 18251) (Lactobacillus fermentum).